The chain runs to 102 residues: UPF0328 protein ECU10_1820 (102 aa).

Belongs to the UPF0328 family.

The polypeptide is UPF0328 protein ECU10_1820 (Encephalitozoon cuniculi (strain GB-M1) (Microsporidian parasite)).